We begin with the raw amino-acid sequence, 122 residues long: Large ribosomal subunit protein uL14 (122 aa).

The protein belongs to the universal ribosomal protein uL14 family. Part of the 50S ribosomal subunit. Forms a cluster with proteins L3 and L19. In the 70S ribosome, L14 and L19 interact and together make contacts with the 16S rRNA in bridges B5 and B8.

Binds to 23S rRNA. Forms part of two intersubunit bridges in the 70S ribosome. This is Large ribosomal subunit protein uL14 from Pseudomonas aeruginosa (strain LESB58).